A 130-amino-acid chain; its full sequence is D-ribose pyranase (130 aa).

His-20 serves as the catalytic Proton donor. Substrate-binding positions include Asp-28, His-97, and 119–121; that span reads YAN.

The protein belongs to the RbsD / FucU family. RbsD subfamily. As to quaternary structure, homodecamer.

It localises to the cytoplasm. The catalysed reaction is beta-D-ribopyranose = beta-D-ribofuranose. Its pathway is carbohydrate metabolism; D-ribose degradation; D-ribose 5-phosphate from beta-D-ribopyranose: step 1/2. Catalyzes the interconversion of beta-pyran and beta-furan forms of D-ribose. The chain is D-ribose pyranase from Bacillus pumilus (strain SAFR-032).